We begin with the raw amino-acid sequence, 626 residues long: Glycosyltransferase 25 family member (626 aa).

The N-terminal stretch at 1–21 is a signal peptide; it reads MLKKQVFYGILLICAFVCIYG. N-linked (GlcNAc...) asparagine glycans are attached at residues N113, N234, N272, and N533. Positions 623–626 match the Prevents secretion from ER motif; it reads HQEL.

It belongs to the glycosyltransferase 25 family.

The protein localises to the endoplasmic reticulum lumen. The protein is Glycosyltransferase 25 family member of Drosophila pseudoobscura pseudoobscura (Fruit fly).